The following is a 255-amino-acid chain: Alkaline ceramidase (255 aa).

Residues 1-28 (MADGISSFWGPVTSTIECCEMNYAYSSY) lie on the Lumenal side of the membrane. A helical membrane pass occupies residues 29–49 (IAEFYNTISNVPGILLALIGL). Residues 50–60 (VNALRQRFEKR) lie on the Cytoplasmic side of the membrane. A helical membrane pass occupies residues 61 to 81 (FSILHISNMILAIGSMLYHAT). Histidine 79 is a binding site for Zn(2+). The Lumenal segment spans residues 82 to 91 (LQHVQQQSDE). Residues 92 to 112 (TPMVWEILLYMYILYSPDWHY) traverse the membrane as a helical segment. The Cytoplasmic segment spans residues 113–118 (RSTMPT). The next 2 membrane-spanning stretches (helical) occupy residues 119 to 139 (FLFLYGAAFAIVHAYLRFGIG) and 140 to 160 (FKVHYVILCLLCIPRMYKYYI). The Cytoplasmic portion of the chain corresponds to 161–169 (HTEDTAAKR). Residues 170 to 192 (IAKWYVATILVGSICWFCDRVFC) traverse the membrane as a helical segment. Residues 193–205 (KTISQWPVNPQGH) lie on the Lumenal side of the membrane. Residues histidine 205 and histidine 209 each contribute to the Zn(2+) site. A helical transmembrane segment spans residues 206–226 (ALWHVFMSFNSYCANTFLMFC). Residues 227 to 255 (RAQQRGWNPKVKYFLGVLPYVKIEKPKTQ) are Cytoplasmic-facing.

It belongs to the alkaline ceramidase family. Zn(2+) serves as cofactor. In terms of tissue distribution, mostly expressed in roots, shoot meristems and pollen, and, to a lower extent, in mature leaves.

Its subcellular location is the endoplasmic reticulum membrane. It localises to the golgi apparatus membrane. In terms of biological role, hydrolyzes only phytoceramide into phytosphingosine and free fatty acid. Does not have reverse activity. Affects plant morphogenesis. Required for the formation of wax layer that ensure cuticle permeability. Implicated in abscisic acid (ABA)-mediated stomatal closure. Involved in both biotic and abiotic stresses. Promotes salt resistance and defenses responses toward pathogenic bacteria (e.g. P.syringae) and against the fungal toxin fumonisin B1 (FB1). The sequence is that of Alkaline ceramidase from Arabidopsis thaliana (Mouse-ear cress).